Consider the following 287-residue polypeptide: uncharacterized protein (287 aa).

The interval 1-44 is disordered; that stretch reads MAAPRNLTGDGGARQLVKDEESPAASSAAKGLLNDDSPTGKRTK. S37 carries the phosphoserine modification. 5 helical membrane-spanning segments follow: residues 55–75, 124–144, 147–167, 218–238, and 260–280; these read FAVF…IYLT, TFMI…FGVV, FVLV…LSKL, PIVD…LMPA, and DFKT…PALL.

It localises to the membrane. This is an uncharacterized protein from Arabidopsis thaliana (Mouse-ear cress).